A 165-amino-acid chain; its full sequence is 6,7-dimethyl-8-ribityllumazine synthase (165 aa).

Residues tyrosine 30, 61–63 (ALE), and 90–92 (VVI) contribute to the 5-amino-6-(D-ribitylamino)uracil site. 95–96 (ET) is a binding site for (2S)-2-hydroxy-3-oxobutyl phosphate. Catalysis depends on histidine 98, which acts as the Proton donor. Asparagine 123 contributes to the 5-amino-6-(D-ribitylamino)uracil binding site. Residue arginine 137 coordinates (2S)-2-hydroxy-3-oxobutyl phosphate.

The protein belongs to the DMRL synthase family.

It catalyses the reaction (2S)-2-hydroxy-3-oxobutyl phosphate + 5-amino-6-(D-ribitylamino)uracil = 6,7-dimethyl-8-(1-D-ribityl)lumazine + phosphate + 2 H2O + H(+). The protein operates within cofactor biosynthesis; riboflavin biosynthesis; riboflavin from 2-hydroxy-3-oxobutyl phosphate and 5-amino-6-(D-ribitylamino)uracil: step 1/2. Its function is as follows. Catalyzes the formation of 6,7-dimethyl-8-ribityllumazine by condensation of 5-amino-6-(D-ribitylamino)uracil with 3,4-dihydroxy-2-butanone 4-phosphate. This is the penultimate step in the biosynthesis of riboflavin. The chain is 6,7-dimethyl-8-ribityllumazine synthase from Xanthobacter autotrophicus (strain ATCC BAA-1158 / Py2).